Here is a 146-residue protein sequence, read N- to C-terminus: uncharacterized protein (146 aa).

This is an uncharacterized protein from Saccharomyces cerevisiae (strain ATCC 204508 / S288c) (Baker's yeast).